The sequence spans 327 residues: Probable serine/threonine-protein kinase WNK5 (327 aa).

Residues 1–48 (MPPNPTPPRRATTTTTRATSGVRRGEEEQGGMAVSASAGEEEEAFEEV) form a disordered region. The span at 9–19 (RRATTTTTRAT) shows a compositional bias: low complexity. Positions 39 to 48 (GEEEEAFEEV) are enriched in acidic residues. The region spanning 55 to 314 (GRYADVLGLG…AAELLRDPFF (260 aa)) is the Protein kinase domain. Residue 136–139 (TEVC) participates in ATP binding. Catalysis depends on D203, which acts as the Proton acceptor.

It belongs to the protein kinase superfamily. Ser/Thr protein kinase family. WNK subfamily.

It carries out the reaction L-seryl-[protein] + ATP = O-phospho-L-seryl-[protein] + ADP + H(+). It catalyses the reaction L-threonyl-[protein] + ATP = O-phospho-L-threonyl-[protein] + ADP + H(+). This is Probable serine/threonine-protein kinase WNK5 (WNK5) from Oryza sativa subsp. japonica (Rice).